A 264-amino-acid chain; its full sequence is UPF0162 protein PM0557 (264 aa).

The protein belongs to the UPF0162 family.

This is UPF0162 protein PM0557 from Pasteurella multocida (strain Pm70).